The chain runs to 531 residues: Apolipoprotein N-acyltransferase (531 aa).

A run of 7 helical transmembrane segments spans residues 8-28 (IILL…LLAV), 34-54 (FGIF…IDGV), 69-89 (PAAI…WWLG), 105-125 (LTVV…VVIA), 136-156 (IAAL…LFTG), 178-198 (VVNL…PALI), and 206-226 (AGLA…FYRL). Residues 243–493 (VQPVIDQAKK…RGVIDTILPG (251 aa)) form the CN hydrolase domain. The active-site Proton acceptor is the E287. K351 is a catalytic residue. C405 functions as the Nucleophile in the catalytic mechanism. The chain crosses the membrane as a helical span at residues 507–527 (IFWLTTGILFLVAAISRLGFN).

This sequence belongs to the CN hydrolase family. Apolipoprotein N-acyltransferase subfamily.

The protein resides in the cell inner membrane. It carries out the reaction N-terminal S-1,2-diacyl-sn-glyceryl-L-cysteinyl-[lipoprotein] + a glycerophospholipid = N-acyl-S-1,2-diacyl-sn-glyceryl-L-cysteinyl-[lipoprotein] + a 2-acyl-sn-glycero-3-phospholipid + H(+). Its pathway is protein modification; lipoprotein biosynthesis (N-acyl transfer). Functionally, catalyzes the phospholipid dependent N-acylation of the N-terminal cysteine of apolipoprotein, the last step in lipoprotein maturation. The polypeptide is Apolipoprotein N-acyltransferase (Rhizobium meliloti (strain 1021) (Ensifer meliloti)).